The primary structure comprises 116 residues: Ribosome-binding factor A (116 aa).

It belongs to the RbfA family. As to quaternary structure, monomer. Binds 30S ribosomal subunits, but not 50S ribosomal subunits or 70S ribosomes.

The protein resides in the cytoplasm. One of several proteins that assist in the late maturation steps of the functional core of the 30S ribosomal subunit. Associates with free 30S ribosomal subunits (but not with 30S subunits that are part of 70S ribosomes or polysomes). Required for efficient processing of 16S rRNA. May interact with the 5'-terminal helix region of 16S rRNA. The chain is Ribosome-binding factor A from Streptococcus pneumoniae (strain Hungary19A-6).